A 504-amino-acid polypeptide reads, in one-letter code: MEKFPGYLEFDGARQQSFLYPLFFREYIYVLAYDHGLNRLNRNRSFFLENTDYDKKYSSLIVKRLILRMYEQNRLIIPTKDLNQNSFLGHTSLFYYQMISVLFAVIVEIPFSKRLGSSFQGKQLKKSYNLQSIHSIFPFLEDKLAHFNCVLDVLIPYPIHLEILVQTLRYRVKDASSLHFFRFCLYEYCNWKNFDKKKKSILNPRFLLFLYNSHVCEYESIFFFLRKRSSHFRSTSYQVLFERILFYGKIQHFFKVFVNNFPAILGLLKDPFIHYVRYHGRCILATKDTPLLMNKWKYYFVNLWQCYFSLWFQSQKVNINQLSKDNLEFLGYLSSLRLNPLVVRSQMLENSFLIDNVRINLDSKIPISAIIGSLAKDKFCNVLGHPISKATWTDSSDSDILNRFVRICRNISHYYSGSSKKKNLYRIKYILRLCCVKTLARKHKSTVRAFLKRLGSGLLEEFLTGEDQVLSLIFPRSYYASKRLYRVRIWYLDIIYLNDLVNHE.

It belongs to the intron maturase 2 family. MatK subfamily.

The protein localises to the plastid. It localises to the chloroplast. Usually encoded in the trnK tRNA gene intron. Probably assists in splicing its own and other chloroplast group II introns. This chain is Maturase K, found in Capsella bursa-pastoris (Shepherd's purse).